Here is a 493-residue protein sequence, read N- to C-terminus: GTPase Der (493 aa).

One can recognise an EngA-type G 1 domain in the interval 3–166 (PVIALVGRPN…EALGIFPKDN (164 aa)). Residues 9–16 (GRPNVGKS), 56–60 (DTGGI), and 118–121 (NKVD) each bind GTP. Residues 166–195 (NAEEEGEGEPASEEVAEGEEPTRIPGPSEK) are disordered. A compositionally biased stretch (acidic residues) spans 167–184 (AEEEGEGEPASEEVAEGE). Positions 198-371 (IKIAIIGRPN…SVQESFRSAV (174 aa)) constitute an EngA-type G 2 domain. GTP contacts are provided by residues 204–211 (GRPNVGKS), 251–255 (DTAGV), and 316–319 (NKWD). One can recognise a KH-like domain in the interval 372–456 (TRWPTSRLTS…PIRIEYKGGE (85 aa)). A compositionally biased stretch (basic and acidic residues) spans 454-463 (GGENPYEGKK). A disordered region spans residues 454–493 (GGENPYEGKKNSLTARQVNKKRRLMSHHKKAEKKKKDKRR). A compositionally biased stretch (basic residues) spans 471–493 (VNKKRRLMSHHKKAEKKKKDKRR).

The protein belongs to the TRAFAC class TrmE-Era-EngA-EngB-Septin-like GTPase superfamily. EngA (Der) GTPase family. As to quaternary structure, associates with the 50S ribosomal subunit.

In terms of biological role, GTPase that plays an essential role in the late steps of ribosome biogenesis. The polypeptide is GTPase Der (Pseudomonas aeruginosa (strain UCBPP-PA14)).